The primary structure comprises 546 residues: Probable protein kinase UbiB (546 aa).

Residues 123 to 501 (DFDETPLASA…SRRQGQARYL (379 aa)) form the Protein kinase domain. ATP-binding positions include 129 to 137 (LASASIAQV) and K152. The active-site Proton acceptor is D287. A run of 2 helical transmembrane segments spans residues 496-516 (GQAR…VFLL) and 521-541 (HIEW…LGWF).

The protein belongs to the ABC1 family. UbiB subfamily.

It is found in the cell inner membrane. It functions in the pathway cofactor biosynthesis; ubiquinone biosynthesis [regulation]. Functionally, is probably a protein kinase regulator of UbiI activity which is involved in aerobic coenzyme Q (ubiquinone) biosynthesis. The sequence is that of Probable protein kinase UbiB from Aeromonas salmonicida (strain A449).